A 64-amino-acid polypeptide reads, in one-letter code: Prokaryotic ubiquitin-like protein Pup (64 aa).

Residues 20–58 are ARC ATPase binding; it reads QELTLAASHVVSDVSEVDDLLDEIDGLLAENAEDFVTGF. Glutamate 64 participates in a covalent cross-link: Isoglutamyl lysine isopeptide (Glu-Lys) (interchain with K-? in acceptor proteins).

Belongs to the prokaryotic ubiquitin-like protein family. Strongly interacts with the proteasome-associated ATPase ARC through a hydrophobic interface; the interacting region of Pup lies in its C-terminal half. There is one Pup binding site per ARC hexamer ring.

Its pathway is protein degradation; proteasomal Pup-dependent pathway. Protein modifier that is covalently attached to lysine residues of substrate proteins, thereby targeting them for proteasomal degradation. The tagging system is termed pupylation. This Rothia mucilaginosa (strain DY-18) (Stomatococcus mucilaginosus) protein is Prokaryotic ubiquitin-like protein Pup.